A 158-amino-acid chain; its full sequence is Cyclic pyranopterin monophosphate synthase (158 aa).

Residues 74–76 (MCH) and 112–113 (ME) each bind substrate. The active site involves aspartate 127.

Belongs to the MoaC family. Homohexamer; trimer of dimers.

The enzyme catalyses (8S)-3',8-cyclo-7,8-dihydroguanosine 5'-triphosphate = cyclic pyranopterin phosphate + diphosphate. It participates in cofactor biosynthesis; molybdopterin biosynthesis. Its function is as follows. Catalyzes the conversion of (8S)-3',8-cyclo-7,8-dihydroguanosine 5'-triphosphate to cyclic pyranopterin monophosphate (cPMP). The sequence is that of Cyclic pyranopterin monophosphate synthase from Helicobacter pylori (strain J99 / ATCC 700824) (Campylobacter pylori J99).